A 143-amino-acid polypeptide reads, in one-letter code: Glutamate-rich protein 4 (143 aa).

Residues 90–106 are compositionally biased toward acidic residues; that stretch reads LEEEEEDDDEEEQEEEG. Positions 90–143 are disordered; it reads LEEEEEDDDEEEQEEEGEGKNCVEENKGLQGKQGEKCSGNPYPAQRLPDFEMTI. The segment covering 107 to 116 has biased composition (basic and acidic residues); that stretch reads EGKNCVEENK.

This Rattus norvegicus (Rat) protein is Glutamate-rich protein 4 (Erich4).